The sequence spans 191 residues: Calcium-activated potassium channel subunit beta-1 (191 aa).

Residues 1 to 15 (MGKKLVMAQKRGETR) are Cytoplasmic-facing. A helical membrane pass occupies residues 16–36 (ALCLGVAMVMCAVIAYYILGT). Residues 37–157 (TMLPLYQKSV…YRRLYGPQTL (121 aa)) lie on the Extracellular side of the membrane. N-linked (GlcNAc...) asparagine glycosylation is found at N80 and N142. A helical transmembrane segment spans residues 158–178 (LFSLFWPTFLLTGGLLIIAMV). The Cytoplasmic segment spans residues 179-191 (KINQSLSILAAQR).

This sequence belongs to the KCNMB (TC 8.A.14.1) family. KCNMB1 subfamily. Interacts with KCNMA1 tetramer. There are probably 4 molecules of KCMNB1 per KCNMA1 tetramer. Post-translationally, N-glycosylated.

It localises to the membrane. In terms of biological role, regulatory subunit of the calcium activated potassium KCNMA1 (maxiK) channel. Modulates the calcium sensitivity and gating kinetics of KCNMA1, thereby contributing to KCNMA1 channel diversity. Increases the apparent Ca(2+)/voltage sensitivity of the KCNMA1 channel. It also modifies KCNMA1 channel kinetics and alters its pharmacological properties. It slows down the activation and the deactivation kinetics of the channel. Acts as a negative regulator of smooth muscle contraction by enhancing the calcium sensitivity to KCNMA1. Its presence is also a requirement for internal binding of the KCNMA1 channel opener dehydrosoyasaponin I (DHS-1) triterpene glycoside and for external binding of the agonist hormone 17-beta-estradiol (E2). Increases the binding activity of charybdotoxin (CTX) toxin to KCNMA1 peptide blocker by increasing the CTX association rate and decreasing the dissociation rate. The chain is Calcium-activated potassium channel subunit beta-1 (KCNMB1) from Canis lupus familiaris (Dog).